A 573-amino-acid polypeptide reads, in one-letter code: Putative inorganic phosphate transporter C1683.01 (573 aa).

The next 6 helical transmembrane spans lie at 48 to 68 (MMLA…INLV), 100 to 120 (AASN…GDFF), 124 to 144 (FVYG…IAMP), 154 to 174 (MMWV…DYPM), 194 to 214 (LIFA…IILL), and 230 to 250 (LEGV…GVLI). Over residues 261–270 (FKNSQQLNSG) the composition is skewed to polar residues. Disordered regions lie at residues 261–280 (FKNS…TSLN) and 290–312 (PSVT…RSNT). Transmembrane regions (helical) follow at residues 348–368 (HLLG…GVNL), 397–417 (LIIA…LVEI), 422–442 (WIQL…AGRW), 451–471 (FACF…TTFI), 487–507 (GISA…FNFL), and 510–530 (IIGY…GILF).

It belongs to the major facilitator superfamily. Sugar transporter (TC 2.A.1.1) family.

The protein resides in the endoplasmic reticulum membrane. In terms of biological role, high-affinity transporter for external inorganic phosphate. The polypeptide is Putative inorganic phosphate transporter C1683.01 (Schizosaccharomyces pombe (strain 972 / ATCC 24843) (Fission yeast)).